The primary structure comprises 550 residues: Amino acid transporter AVT1D (550 aa).

Positions Met-1 to Leu-16 are enriched in basic and acidic residues. The disordered stretch occupies residues Met-1–Leu-99. The segment covering Thr-84–Leu-99 has biased composition (polar residues). A run of 11 helical transmembrane segments spans residues Ser-164–Ile-184, Trp-189–Met-209, Phe-236–Met-256, Leu-264–Ile-286, Ser-308–Val-328, Leu-345–Ile-365, Phe-375–Val-395, Val-424–Met-444, Gly-459–Val-479, Phe-481–Phe-501, and Leu-521–Ile-541.

This sequence belongs to the amino acid/polyamine transporter 2 family. Amino acid/auxin permease (AAAP) (TC 2.A.18.5) subfamily.

It localises to the membrane. The polypeptide is Amino acid transporter AVT1D (Arabidopsis thaliana (Mouse-ear cress)).